Reading from the N-terminus, the 445-residue chain is Protein cereblon (445 aa).

The interval M1–N48 is disordered. The span at D24–D38 shows a compositional bias: acidic residues. The residue at position 25 (S25) is a Phosphoserine. Positions I84 to T322 constitute a Lon N-terminal domain. Residues C321 to I429 form the CULT domain. 2 residues coordinate Zn(2+): C326 and C329. (S)-thalidomide is bound by residues H381, W383, and W389. 2 residues coordinate Zn(2+): C394 and C397.

Belongs to the CRBN family. Component of a DCX (DDB1-CUL4-X-box) protein ligase complex, at least composed of CRBN, CUL4A, DDB1 and RBX1. Interacts directly with DDB1. Interacts with KCNT1. Interacts with ILF2. Interacts with TRAF6 and ECSIT. In terms of processing, ubiquitinated, ubiquitination is mediated by its own DCX protein ligase complex. Highly expressed in brain.

The protein resides in the cytoplasm. Its subcellular location is the nucleus. It is found in the membrane. The protein operates within protein modification; protein ubiquitination. Its function is as follows. Substrate recognition component of a DCX (DDB1-CUL4-X-box) E3 protein ligase complex that mediates the ubiquitination and subsequent proteasomal degradation of target proteins, such as MEIS2, ILF2 or GLUL. Normal degradation of key regulatory proteins is required for normal limb outgrowth and expression of the fibroblast growth factor FGF8. Maintains presynaptic glutamate release and consequently, cognitive functions such as memory and learning, by negatively regulating large-conductance calcium-activated potassium (BK) channels in excitatory neurons. Likely to function by regulating the assembly and neuronal surface expression of BK channels via its interaction with KCNT1. May also be involved in regulating anxiety-like behaviors via a BK channel-independent mechanism. Plays a negative role in TLR4 signaling by interacting with TRAF6 and ECSIT, leading to inhibition of ECSIT ubiquitination, an important step of the signaling. The polypeptide is Protein cereblon (Crbn) (Mus musculus (Mouse)).